Consider the following 49-residue polypeptide: Osteocalcin (49 aa).

In terms of domain architecture, Gla spans 1–47 (YLDHGLGAPAPYPDPLEPRREVCELNPDCDELADHIGFQEAYRRFYG). Hydroxyproline is present on Pro9. 4 residues coordinate Ca(2+): Glu17, Glu21, Glu24, and Asp30. 3 positions are modified to 4-carboxyglutamate: Glu17, Glu21, and Glu24. A disulfide bridge links Cys23 with Cys29.

It belongs to the osteocalcin/matrix Gla protein family. Post-translationally, gamma-carboxyglutamate residues are formed by vitamin K dependent carboxylation by GGCX. These residues are essential for the binding of calcium. Decarboxylation promotes the hormone activity.

Its subcellular location is the secreted. In terms of biological role, the carboxylated form is one of the main organic components of the bone matrix, which constitutes 1-2% of the total bone protein. It acts as a negative regulator of bone formation and is required to limit bone formation without impairing bone resorption or mineralization. The carboxylated form binds strongly to apatite and calcium. The uncarboxylated form acts as a hormone secreted by osteoblasts, which regulates different cellular processes, such as energy metabolism, male fertility and brain development. Regulates of energy metabolism by acting as a hormone favoring pancreatic beta-cell proliferation, insulin secretion and sensitivity and energy expenditure. Uncarboxylated osteocalcin hormone also promotes testosterone production in the testes: acts as a ligand for G protein-coupled receptor GPRC6A at the surface of Leydig cells, initiating a signaling response that promotes the expression of enzymes required for testosterone synthesis in a CREB-dependent manner. Also acts as a regulator of brain development: osteocalcin hormone crosses the blood-brain barrier and acts as a ligand for GPR158 on neurons, initiating a signaling response that prevents neuronal apoptosis in the hippocampus, favors the synthesis of all monoamine neurotransmitters and inhibits that of gamma-aminobutyric acid (GABA). Osteocalcin also crosses the placenta during pregnancy and maternal osteocalcin is required for fetal brain development. The protein is Osteocalcin (BGLAP) of Sus scrofa (Pig).